Consider the following 262-residue polypeptide: Acyl-[acyl-carrier-protein]--UDP-N-acetylglucosamine O-acyltransferase (262 aa).

Belongs to the transferase hexapeptide repeat family. LpxA subfamily. Homotrimer.

Its subcellular location is the cytoplasm. It catalyses the reaction a (3R)-hydroxyacyl-[ACP] + UDP-N-acetyl-alpha-D-glucosamine = a UDP-3-O-[(3R)-3-hydroxyacyl]-N-acetyl-alpha-D-glucosamine + holo-[ACP]. Its pathway is glycolipid biosynthesis; lipid IV(A) biosynthesis; lipid IV(A) from (3R)-3-hydroxytetradecanoyl-[acyl-carrier-protein] and UDP-N-acetyl-alpha-D-glucosamine: step 1/6. In terms of biological role, involved in the biosynthesis of lipid A, a phosphorylated glycolipid that anchors the lipopolysaccharide to the outer membrane of the cell. The protein is Acyl-[acyl-carrier-protein]--UDP-N-acetylglucosamine O-acyltransferase of Sodalis glossinidius (strain morsitans).